The primary structure comprises 241 residues: Exosome complex component RRP41 homolog (241 aa).

At Met-1 the chain carries N-acetylmethionine.

It belongs to the RNase PH family. As to quaternary structure, component of the RNA exosome complex. Interacts with RPP4.

It is found in the cytoplasm. The protein localises to the nucleus. Its subcellular location is the nucleolus. Functionally, non-catalytic component of the RNA exosome complex which has 3'-&gt;5' exoribonuclease activity and participates in a multitude of cellular RNA processing, maturation and degradation events. In vitro, is a processive phosphorolytic exonuclease and requires a single-stranded poly(A) tail on the substrate RNA for its activity. Can complement the growth defect of a yeast mutant lacking RRP41 exonuclease. Required for normal development of female gametophytes. The sequence is that of Exosome complex component RRP41 homolog from Arabidopsis thaliana (Mouse-ear cress).